A 608-amino-acid chain; its full sequence is Mitochondrial import receptor subunit TOM70 (608 aa).

Residue Ala-2 is modified to N-acetylalanine. Residues 2–38 (AASKPVEAAVVAAAVPSSGSGVGGGGTAGPGTGGLPR) are Mitochondrial intermembrane-facing. The chain crosses the membrane as a helical span at residues 39–59 (WQLALAVGAPLLLGAGAIYLW). Topologically, residues 60–608 (SRQQRRREAR…KKYGLKPPTL (549 aa)) are cytoplasmic. The tract at residues 67–107 (EARGRGDASGLKRNSERKTPEGRASPAPGSGHPEGPGAHLD) is disordered. The residue at position 71 (Arg-71) is an Omega-N-methylarginine. Residues Ser-91, Ser-96, and Ser-110 each carry the phosphoserine modification. 2 TPR repeats span residues 114 to 147 (AQAA…CPTE) and 153 to 186 (STFY…NPKY). Lys-185 bears the N6-acetyllysine mark. A Glycyl lysine isopeptide (Lys-Gly) (interchain with G-Cter in SUMO2) cross-link involves residue Lys-275. 8 TPR repeats span residues 294 to 327 (ENSG…EGKY), 329 to 362 (AEAL…KEAN), 367 to 400 (ANAL…DPQN), 401 to 434 (ADVY…RPES), 440 to 475 (QKCF…FPRC), 476 to 509 (AEGY…EPDN), 511 to 544 (TTYV…DNKC), and 545 to 578 (DFAY…AKSE). Ser-434 carries the post-translational modification Phosphoserine.

It belongs to the Tom70 family. As to quaternary structure, forms part of the preprotein translocase complex of the outer mitochondrial membrane (TOM complex) which consists of at least 7 different proteins (TOMM5, TOMM6, TOMM7, TOMM20, TOMM22, TOMM40 and TOMM70). Interacts with CAPN8. Interacts with TRADD, TRAF6 and STING. Interacts with MAVS; the interaction is enhanced by Sendai virus infection. Interacts with HSPA8 and HSP90AA1; both interactions are required for preprotein mitochondrial import. The interaction with HSP90AA1 is direct and mediates the association of TOMM70 with IRF3 and TBK1. Upon mitochondrial depolarization, interacts with PINK1; the interaction is required for PINK1-TOM-TIM23 supercomplex formation which is critical for PINK1 stabilization at the outer mitochondrial membrane, kinase activation and downstream mitophagy. (Microbial infection) Interacts (via C-terminus) with SARS coronaviru/SARS-CoV and SARS coronavirus-2/SARS-CoV-2 virus protein ORF9b. In terms of assembly, (Microbial infection) Interacts with parasite T.gondii RH strain MAF1b1; the interaction impairs TOMM70 import activity, enables the parasite to associate with the host mitochondria and facilitates the association of MAF1b1 with MIB complex component SAMM50, promoting the formation of SPOTs (structures positive for outer mitochondrial membrane (OMM)); the interaction is probably indirect.

Its subcellular location is the mitochondrion outer membrane. Acts as a receptor of the preprotein translocase complex of the outer mitochondrial membrane (TOM complex). Recognizes and mediates the translocation of mitochondrial preproteins from the cytosol into the mitochondria in a chaperone dependent manner. Mediates TBK1 and IRF3 activation induced by MAVS in response to Sendai virus infection and promotes host antiviral responses during virus infection. Upon Sendai virus infection, recruits HSP90AA1:IRF3:BAX in mitochondrion and the complex induces apoptosis. The protein is Mitochondrial import receptor subunit TOM70 of Homo sapiens (Human).